The chain runs to 303 residues: Energy-coupling factor transporter ATP-binding protein EcfA2 (303 aa).

The ABC transporter domain maps to Leu17 to Ile260. Gly54–Ser61 contacts ATP.

This sequence belongs to the ABC transporter superfamily. Energy-coupling factor EcfA family. As to quaternary structure, forms a stable energy-coupling factor (ECF) transporter complex composed of 2 membrane-embedded substrate-binding proteins (S component), 2 ATP-binding proteins (A component) and 2 transmembrane proteins (T component).

The protein resides in the cell membrane. Its function is as follows. ATP-binding (A) component of a common energy-coupling factor (ECF) ABC-transporter complex. Unlike classic ABC transporters this ECF transporter provides the energy necessary to transport a number of different substrates. The protein is Energy-coupling factor transporter ATP-binding protein EcfA2 of Mycoplasma pneumoniae (strain ATCC 29342 / M129 / Subtype 1) (Mycoplasmoides pneumoniae).